We begin with the raw amino-acid sequence, 460 residues long: Nuclear distribution protein PAC1 (460 aa).

A LisH domain is found at 9 to 41; it reads QAEELHKSIIAYLAANNLQDSANAMRTELGLGE. The stretch at 61–88 forms a coiled coil; the sequence is TSVVRLQKKIMDLEAQTQTLQTELNSAT. Residues 82 to 92 show a composition bias toward polar residues; the sequence is TELNSATPTSN. The segment at 82–105 is disordered; sequence TELNSATPTSNRRGDPSSWLPAGP. 7 WD repeats span residues 112–153, 155–195, 199–246, 249–288, 293–354, 355–394, and 399–456; these read SHRT…RTVK, HTKA…QNIR, GHDH…CVKT, GHADWIRDVSPSLDGKYLLSTGNDRTVRLWDISVPNPEAK, GHEH…KTLI, GHDNWVRGLVFHPSGKFLLSVSDDKTIRCWDLSQEGKCVK, and SHEH…MSLR. The interval 414 to 433 is disordered; the sequence is IKDKGPGEETNGDVGTPKKA.

The protein belongs to the WD repeat LIS1/nudF family. In terms of assembly, self-associates. Interacts with NDL1 and dynein.

The protein resides in the cytoplasm. It is found in the cytoskeleton. The protein localises to the spindle pole. Functionally, positively regulates the activity of the minus-end directed microtubule motor protein dynein. May enhance dynein-mediated microtubule sliding by targeting dynein to the microtubule plus end. Required for nuclear migration during vegetative growth as well as development. Required for retrograde early endosome (EE) transport from the hyphal tip. Required for localization of dynein to the mitotic spindle poles. Recruits additional proteins to the dynein complex at SPBs. This chain is Nuclear distribution protein PAC1, found in Gibberella zeae (strain ATCC MYA-4620 / CBS 123657 / FGSC 9075 / NRRL 31084 / PH-1) (Wheat head blight fungus).